A 213-amino-acid polypeptide reads, in one-letter code: Protein Pars_0011 (213 aa).

The 194-residue stretch at 8-201 folds into the AMMECR1 domain; it reads EEGRYLVKLA…EREPNEEVYQ (194 aa).

This chain is Protein Pars_0011, found in Pyrobaculum arsenaticum (strain DSM 13514 / JCM 11321 / PZ6).